A 239-amino-acid chain; its full sequence is Purine nucleoside phosphorylase DeoD-type (239 aa).

His5 serves as a coordination point for a purine D-ribonucleoside. The phosphate site is built by Gly21 and Arg25. An N6-acetyllysine modification is found at Lys27. Phosphate is bound by residues Arg44 and 88-91 (RVGS). A purine D-ribonucleoside is bound by residues 180–182 (EME) and 204–205 (SD). Residue Asp205 is the Proton donor of the active site.

The protein belongs to the PNP/UDP phosphorylase family. Homohexamer; trimer of homodimers.

The enzyme catalyses a purine D-ribonucleoside + phosphate = a purine nucleobase + alpha-D-ribose 1-phosphate. It catalyses the reaction a purine 2'-deoxy-D-ribonucleoside + phosphate = a purine nucleobase + 2-deoxy-alpha-D-ribose 1-phosphate. In terms of biological role, catalyzes the reversible phosphorolytic breakdown of the N-glycosidic bond in the beta-(deoxy)ribonucleoside molecules, with the formation of the corresponding free purine bases and pentose-1-phosphate. The protein is Purine nucleoside phosphorylase DeoD-type of Escherichia coli O8 (strain IAI1).